The sequence spans 237 residues: Demethylmenaquinone methyltransferase (237 aa).

Residues threonine 58, aspartate 79, and 106–107 (NA) each bind S-adenosyl-L-methionine.

Belongs to the class I-like SAM-binding methyltransferase superfamily. MenG/UbiE family.

It carries out the reaction a 2-demethylmenaquinol + S-adenosyl-L-methionine = a menaquinol + S-adenosyl-L-homocysteine + H(+). Its pathway is quinol/quinone metabolism; menaquinone biosynthesis; menaquinol from 1,4-dihydroxy-2-naphthoate: step 2/2. Methyltransferase required for the conversion of demethylmenaquinol (DMKH2) to menaquinol (MKH2). The protein is Demethylmenaquinone methyltransferase of Bacillus anthracis (strain A0248).